Here is a 954-residue protein sequence, read N- to C-terminus: Glycine dehydrogenase (decarboxylating) (954 aa).

Lysine 701 is subject to N6-(pyridoxal phosphate)lysine.

Belongs to the GcvP family. In terms of assembly, the glycine cleavage system is composed of four proteins: P, T, L and H. Requires pyridoxal 5'-phosphate as cofactor.

The catalysed reaction is N(6)-[(R)-lipoyl]-L-lysyl-[glycine-cleavage complex H protein] + glycine + H(+) = N(6)-[(R)-S(8)-aminomethyldihydrolipoyl]-L-lysyl-[glycine-cleavage complex H protein] + CO2. The glycine cleavage system catalyzes the degradation of glycine. The P protein binds the alpha-amino group of glycine through its pyridoxal phosphate cofactor; CO(2) is released and the remaining methylamine moiety is then transferred to the lipoamide cofactor of the H protein. The chain is Glycine dehydrogenase (decarboxylating) from Bordetella parapertussis (strain 12822 / ATCC BAA-587 / NCTC 13253).